A 424-amino-acid chain; its full sequence is Hemagglutinin-esterase (424 aa).

The N-terminal stretch at 1-16 (MFLLPRFVLVSCIIGS) is a signal peptide. Residues 7-127 (FVLVSCIIGS…SNDIWMQNKG (121 aa)) form an esterase domain 1 region. Residues 17–392 (LGFDNPPTNV…PICVYDPLPI (376 aa)) are Virion surface-facing. Ser40 (nucleophile) is an active-site residue. A disulfide bond links Cys44 and Cys65. N-linked (GlcNAc...) asparagine; by host glycosylation is found at Asn54, Asn89, Asn153, Asn236, and Asn301. Disulfide bonds link Cys113/Cys162, Cys197/Cys276, and Cys205/Cys249. The segment at 128 to 266 (LFYTQVYKNM…GNYLAISNEL (139 aa)) is receptor binding. The esterase domain 2 stretch occupies residues 267 to 379 (LLTVPTKAIC…RCPTAADINT (113 aa)). Cys307 and Cys312 are joined by a disulfide. Asn316 carries N-linked (GlcNAc...) asparagine; by host glycosylation. Residues Asp326 and His329 each act as charge relay system in the active site. Residues Cys347 and Cys371 are joined by a disulfide bond. N-linked (GlcNAc...) asparagine; by host glycosylation occurs at Asn358. The chain crosses the membrane as a helical span at residues 393–413 (ILLGILLSVAVIIIVVLLLYF). Over 414–424 (MVDNGTRLHDA) the chain is Intravirion. Asn417 is a glycosylation site (N-linked (GlcNAc...) asparagine; by host).

It belongs to the influenza type C/coronaviruses hemagglutinin-esterase family. In terms of assembly, homodimer; disulfide-linked. Forms a complex with the M protein in the pre-Golgi. Associates then with S-M complex to form a ternary complex S-M-HE. Post-translationally, N-glycosylated in the host RER.

Its subcellular location is the virion membrane. It is found in the host cell membrane. The catalysed reaction is N-acetyl-9-O-acetylneuraminate + H2O = N-acetylneuraminate + acetate + H(+). The enzyme catalyses N-acetyl-4-O-acetylneuraminate + H2O = N-acetylneuraminate + acetate + H(+). Structural protein that makes short spikes at the surface of the virus. Contains receptor binding and receptor-destroying activities. Mediates de-O-acetylation of N-acetyl-4-O-acetylneuraminic acid, which is probably the receptor determinant recognized by the virus on the surface of erythrocytes and susceptible cells. This receptor-destroying activity is important for virus release as it probably helps preventing self-aggregation and ensures the efficient spread of the progeny virus from cell to cell. May serve as a secondary viral attachment protein for initiating infection, the spike protein being the major one. May become a target for both the humoral and the cellular branches of the immune system. This Bos taurus (Bovine) protein is Hemagglutinin-esterase.